The sequence spans 375 residues: Type II restriction enzyme ApaLI (375 aa).

The catalysed reaction is Endonucleolytic cleavage of DNA to give specific double-stranded fragments with terminal 5'-phosphates.. A subtype P restriction enzyme that recognizes the double-stranded sequence 5'-GTGCAC-3' and cleaves after G-1. The chain is Type II restriction enzyme ApaLI from Acetobacter pasteurianus (Acetobacter turbidans).